The chain runs to 202 residues: Interleukin-17D (202 aa).

A signal peptide spans 1–15 (MLVAGFLLALPPSWA). Residues 65 to 85 (QARNASCPAGGRPADRRFRPP) are disordered. 2 N-linked (GlcNAc...) asparagine glycosylation sites follow: N68 and N181.

Belongs to the IL-17 family. As to expression, expressed preferentially in adipose, skeletal muscle and CNS.

The protein resides in the secreted. Functionally, induces expression of IL6, CXCL8/IL8, and CSF2/GM-CSF from endothelial cells. The chain is Interleukin-17D (IL17D) from Homo sapiens (Human).